The following is a 262-amino-acid chain: 3-methyl-2-oxobutanoate hydroxymethyltransferase (262 aa).

Mg(2+) contacts are provided by D43 and D82. Residues 43-44 (DS), D82, and K111 contribute to the 3-methyl-2-oxobutanoate site. E113 contacts Mg(2+). The active-site Proton acceptor is E180.

This sequence belongs to the PanB family. As to quaternary structure, homodecamer; pentamer of dimers. The cofactor is Mg(2+).

Its subcellular location is the cytoplasm. The catalysed reaction is 3-methyl-2-oxobutanoate + (6R)-5,10-methylene-5,6,7,8-tetrahydrofolate + H2O = 2-dehydropantoate + (6S)-5,6,7,8-tetrahydrofolate. It functions in the pathway cofactor biosynthesis; coenzyme A biosynthesis. In terms of biological role, catalyzes the reversible reaction in which hydroxymethyl group from 5,10-methylenetetrahydrofolate is transferred onto alpha-ketoisovalerate to form ketopantoate. The protein is 3-methyl-2-oxobutanoate hydroxymethyltransferase of Pyrobaculum aerophilum (strain ATCC 51768 / DSM 7523 / JCM 9630 / CIP 104966 / NBRC 100827 / IM2).